We begin with the raw amino-acid sequence, 95 residues long: Acylphosphatase (95 aa).

Residues 7–94 form the Acylphosphatase-like domain; that stretch reads AALVRITGRV…EAPAGFRITR (88 aa). Residues arginine 22 and asparagine 40 contribute to the active site. Low complexity predominate over residues 76 to 88; that stretch reads VASEEASSAEAPA. A disordered region spans residues 76–95; that stretch reads VASEEASSAEAPAGFRITRG.

The protein belongs to the acylphosphatase family.

The catalysed reaction is an acyl phosphate + H2O = a carboxylate + phosphate + H(+). The chain is Acylphosphatase (acyP) from Rhizobium meliloti (strain 1021) (Ensifer meliloti).